Here is a 156-residue protein sequence, read N- to C-terminus: Superoxide dismutase [Cu-Zn] 2 (156 aa).

3 residues coordinate Cu cation: H47, H49, and H64. A disulfide bond links C58 and C147. Zn(2+) is bound by residues H64, H72, H81, and D84. A Cu cation-binding site is contributed by H121.

It belongs to the Cu-Zn superoxide dismutase family. In terms of assembly, homodimer. Cu cation serves as cofactor. Requires Zn(2+) as cofactor.

The protein localises to the cytoplasm. The enzyme catalyses 2 superoxide + 2 H(+) = H2O2 + O2. In terms of biological role, destroys radicals which are normally produced within the cells and which are toxic to biological systems. The chain is Superoxide dismutase [Cu-Zn] 2 (SODCC.2) from Mesembryanthemum crystallinum (Common ice plant).